The following is a 324-amino-acid chain: DNA repair and recombination protein RadA (324 aa).

114–121 serves as a coordination point for ATP; sequence GEFGSGKT.

This sequence belongs to the eukaryotic RecA-like protein family.

In terms of biological role, involved in DNA repair and in homologous recombination. Binds and assemble on single-stranded DNA to form a nucleoprotein filament. Hydrolyzes ATP in a ssDNA-dependent manner and promotes DNA strand exchange between homologous DNA molecules. The polypeptide is DNA repair and recombination protein RadA (Sulfurisphaera tokodaii (strain DSM 16993 / JCM 10545 / NBRC 100140 / 7) (Sulfolobus tokodaii)).